We begin with the raw amino-acid sequence, 293 residues long: 1D-myo-inositol 2-acetamido-2-deoxy-alpha-D-glucopyranoside deacetylase (293 aa).

Residues H15, D18, and H148 each contribute to the Zn(2+) site.

It belongs to the MshB deacetylase family. The cofactor is Zn(2+).

The catalysed reaction is 1D-myo-inositol 2-acetamido-2-deoxy-alpha-D-glucopyranoside + H2O = 1D-myo-inositol 2-amino-2-deoxy-alpha-D-glucopyranoside + acetate. Functionally, catalyzes the deacetylation of 1D-myo-inositol 2-acetamido-2-deoxy-alpha-D-glucopyranoside (GlcNAc-Ins) in the mycothiol biosynthesis pathway. This Corynebacterium diphtheriae (strain ATCC 700971 / NCTC 13129 / Biotype gravis) protein is 1D-myo-inositol 2-acetamido-2-deoxy-alpha-D-glucopyranoside deacetylase.